A 1235-amino-acid polypeptide reads, in one-letter code: MGLNIPEKPVNTLWTDDQWKAIQANGNNILVAAAAGSGKTAVLVTRIIEKLVDETGNLNVDELLIVTFTNASAAEMKYRIGKSLEEALSQNPDSSHLKKQVALLNYASISTLHSFCLEIIRKHYFEADIDPNFRLIEPIESSMIRDEVLEELLEKEYSIANNEAFFHLVESFTGDRTDAELHMLISKLYDFSRANPNPDLWLEQMVNFYDTKDINSITELPYFPIIKEDIELRINQAKSYLLNAIEYASENNGPAPYLETLENDLAQINTLSNISWTNWQDVKLRVESMDFKRIPSLKNKSDYDEEYVEETKRFRDAAKKEIKNVLVDWFSREETNYLADLEKMKPDIKTISELVKNFANNFFEEKQRRGVLDFNDLEHLALKILLKNDVPSDVAKSYQKQFKEVLIDEYQDTNMVQETILLLVTNSEESKGNLFMVGDVKQSIYRFRLAEPTLFMTKYQEYQQNGEGEGIRIDLSQNFRSRKEVLDATNFIFHQLMDKHVAEIDYDEAAELTLGANFPKSNHMATELLLIDMKSNENESEDELSPQELQKNQVEARAIATKIREMIDNKFPIYDKKLQQNRSIQYRDIVILSRAMTSAPDMEEAMKVQDIPFYASNNSGYFETTEVATMIALLKVIDNPYQDIPLAAVLRSPIVGLNEEELGQIRMAKKKGYFFDALLAYKDITVSAAADRISDFITQLNNWRELSIRENLTALIWQIYQETNFYEFVGGLPGGKQRQANLRALYDRANQYEKTAFRGLFRFVRFVERLEVRGDDLGTAKTLGEKEDVVRMMTIHASKGLEFPVVIISGLSKKFNMRDIYSKTLLDKDYGFASNYRDIEKMIVYPTIMQQAIKQKKSREMIAEEMRVLYVALTRAEEKLILTATVPDFEKTSKNWLQVSNQKETILPASIRAKAKCYLDWIGNTIIRHTSFKDLLCEERIQTLPTEMKLQIEIKTKEMFLTTELEEHKADNWLENVKAHEPVPVQSAYKDEIERFMNYKYKDVAATEIRAKQSVTELKRQFSLQDSWSDTSILKEFQKVSLDRPKFLQQNKLSATEIGTAMHTLMQAVSLTYKPSEKDLTSLLQSMQEKDILTEAQIKAINIKQIMGFFDSPLGETVLQKSDQVKREVPFSYLLPVAKLYKQSDLEEHVLIQGVVDSMIEEEDAITLIDYKTDKIEGRYANWEAAEKVMKERYQIQIKLYAEAIQAITGKKVSNAYLYFFDGQHICQINIEEGF.

A UvrD-like helicase ATP-binding domain is found at 12-482 (TLWTDDQWKA…IDLSQNFRSR (471 aa)). 33 to 40 (AAAGSGKT) contacts ATP. The 292-residue stretch at 509 to 800 (AAELTLGANF…RMMTIHASKG (292 aa)) folds into the UvrD-like helicase C-terminal domain.

The protein belongs to the helicase family. AddA subfamily. Heterodimer of AddA and AddB/RexB. It depends on Mg(2+) as a cofactor.

It carries out the reaction Couples ATP hydrolysis with the unwinding of duplex DNA by translocating in the 3'-5' direction.. The catalysed reaction is ATP + H2O = ADP + phosphate + H(+). Functionally, the heterodimer acts as both an ATP-dependent DNA helicase and an ATP-dependent, dual-direction single-stranded exonuclease. Recognizes the chi site generating a DNA molecule suitable for the initiation of homologous recombination. The AddA nuclease domain is required for chi fragment generation; this subunit has the helicase and 3' -&gt; 5' nuclease activities. The polypeptide is ATP-dependent helicase/nuclease subunit A (Listeria welshimeri serovar 6b (strain ATCC 35897 / DSM 20650 / CCUG 15529 / CIP 8149 / NCTC 11857 / SLCC 5334 / V8)).